A 224-amino-acid polypeptide reads, in one-letter code: Uridylate kinase (224 aa).

9 to 10 (GS) is a binding site for ATP. G43 serves as a coordination point for UMP. The ATP site is built by G44 and R48. UMP-binding positions include D65 and 113–119 (TEPAHST). ATP contacts are provided by T139, Y145, and D148.

It belongs to the UMP kinase family. Homohexamer.

The protein localises to the cytoplasm. It carries out the reaction UMP + ATP = UDP + ADP. The protein operates within pyrimidine metabolism; CTP biosynthesis via de novo pathway; UDP from UMP (UMPK route): step 1/1. Its activity is regulated as follows. Inhibited by UTP. In terms of biological role, catalyzes the reversible phosphorylation of UMP to UDP. This Methanothermobacter thermautotrophicus (strain ATCC 29096 / DSM 1053 / JCM 10044 / NBRC 100330 / Delta H) (Methanobacterium thermoautotrophicum) protein is Uridylate kinase.